The sequence spans 332 residues: Biotin synthase (332 aa).

Residues 53–282 form the Radical SAM core domain; that stretch reads YFGKKVKLNM…TKEIRISGGR (230 aa). Positions 71, 75, and 78 each coordinate [4Fe-4S] cluster. Residues Cys115, Cys147, Cys207, and Arg277 each contribute to the [2Fe-2S] cluster site.

Belongs to the radical SAM superfamily. Biotin synthase family. As to quaternary structure, homodimer. [4Fe-4S] cluster is required as a cofactor. The cofactor is [2Fe-2S] cluster.

The catalysed reaction is (4R,5S)-dethiobiotin + (sulfur carrier)-SH + 2 reduced [2Fe-2S]-[ferredoxin] + 2 S-adenosyl-L-methionine = (sulfur carrier)-H + biotin + 2 5'-deoxyadenosine + 2 L-methionine + 2 oxidized [2Fe-2S]-[ferredoxin]. Its pathway is cofactor biosynthesis; biotin biosynthesis; biotin from 7,8-diaminononanoate: step 2/2. Its function is as follows. Catalyzes the conversion of dethiobiotin (DTB) to biotin by the insertion of a sulfur atom into dethiobiotin via a radical-based mechanism. This Bacillus anthracis protein is Biotin synthase.